The primary structure comprises 84 residues: UPF0457 protein BC_3525 (84 aa).

Belongs to the UPF0457 family.

This chain is UPF0457 protein BC_3525, found in Bacillus cereus (strain ATCC 14579 / DSM 31 / CCUG 7414 / JCM 2152 / NBRC 15305 / NCIMB 9373 / NCTC 2599 / NRRL B-3711).